A 159-amino-acid polypeptide reads, in one-letter code: 6,7-dimethyl-8-ribityllumazine synthase (159 aa).

Residues phenylalanine 22, 57–59 (AVE), and 81–83 (AVI) each bind 5-amino-6-(D-ribitylamino)uracil. (2S)-2-hydroxy-3-oxobutyl phosphate is bound at residue 86–87 (GT). Residue histidine 89 is the Proton donor of the active site. Position 114 (phenylalanine 114) interacts with 5-amino-6-(D-ribitylamino)uracil. Arginine 128 provides a ligand contact to (2S)-2-hydroxy-3-oxobutyl phosphate.

The protein belongs to the DMRL synthase family. In terms of assembly, forms an icosahedral capsid composed of 60 subunits, arranged as a dodecamer of pentamers.

It catalyses the reaction (2S)-2-hydroxy-3-oxobutyl phosphate + 5-amino-6-(D-ribitylamino)uracil = 6,7-dimethyl-8-(1-D-ribityl)lumazine + phosphate + 2 H2O + H(+). The protein operates within cofactor biosynthesis; riboflavin biosynthesis; riboflavin from 2-hydroxy-3-oxobutyl phosphate and 5-amino-6-(D-ribitylamino)uracil: step 1/2. Functionally, catalyzes the formation of 6,7-dimethyl-8-ribityllumazine by condensation of 5-amino-6-(D-ribitylamino)uracil with 3,4-dihydroxy-2-butanone 4-phosphate. This is the penultimate step in the biosynthesis of riboflavin. This Shewanella denitrificans (strain OS217 / ATCC BAA-1090 / DSM 15013) protein is 6,7-dimethyl-8-ribityllumazine synthase.